Reading from the N-terminus, the 274-residue chain is NH(3)-dependent NAD(+) synthetase (274 aa).

Residue 46–53 coordinates ATP; sequence GISGGQDS. D52 contacts Mg(2+). R140 provides a ligand contact to deamido-NAD(+). ATP is bound at residue T160. Position 165 (E165) interacts with Mg(2+). Residues K173 and D180 each contribute to the deamido-NAD(+) site. ATP contacts are provided by K189 and T211. 260–261 contributes to the deamido-NAD(+) binding site; the sequence is HK.

This sequence belongs to the NAD synthetase family. In terms of assembly, homodimer.

The catalysed reaction is deamido-NAD(+) + NH4(+) + ATP = AMP + diphosphate + NAD(+) + H(+). It participates in cofactor biosynthesis; NAD(+) biosynthesis; NAD(+) from deamido-NAD(+) (ammonia route): step 1/1. In terms of biological role, catalyzes the ATP-dependent amidation of deamido-NAD to form NAD. Uses ammonia as a nitrogen source. This chain is NH(3)-dependent NAD(+) synthetase, found in Streptococcus pyogenes serotype M1.